The following is a 246-amino-acid chain: Hsp70 nucleotide exchange factor fes-1 (246 aa).

The segment covering 23 to 40 has biased composition (polar residues); that stretch reads QSYHSNGAPTPNNNSGPA. A disordered region spans residues 23-63; sequence QSYHSNGAPTPNNNSGPATGTGAVATSPAPQVTGSGPRPVD. ARM repeat units follow at residues 48–92, 113–152, 155–196, and 214–244; these read TSPA…DPSP, LDNA…TAVQ, QKTQ…SAVR, and HEVL…NKAK.

The protein belongs to the FES1 family.

The protein resides in the cytoplasm. Functionally, functions as a nucleotide exchange factor (NEF) for Hsp70 chaperones which accelerates the release of ADP. Required for fully efficient Hsp70-mediated folding of proteins. This is Hsp70 nucleotide exchange factor fes-1 (fes-1) from Neurospora crassa (strain ATCC 24698 / 74-OR23-1A / CBS 708.71 / DSM 1257 / FGSC 987).